The sequence spans 122 residues: Large ribosomal subunit protein uL18 (122 aa).

This sequence belongs to the universal ribosomal protein uL18 family. As to quaternary structure, part of the 50S ribosomal subunit; part of the 5S rRNA/L5/L18/L25 subcomplex. Contacts the 5S and 23S rRNAs.

This is one of the proteins that bind and probably mediate the attachment of the 5S RNA into the large ribosomal subunit, where it forms part of the central protuberance. The protein is Large ribosomal subunit protein uL18 of Desulfitobacterium hafniense (strain Y51).